The primary structure comprises 448 residues: Probable glycine dehydrogenase (decarboxylating) subunit 1 (448 aa).

Belongs to the GcvP family. N-terminal subunit subfamily. In terms of assembly, the glycine cleavage system is composed of four proteins: P, T, L and H. In this organism, the P 'protein' is a heterodimer of two subunits.

The enzyme catalyses N(6)-[(R)-lipoyl]-L-lysyl-[glycine-cleavage complex H protein] + glycine + H(+) = N(6)-[(R)-S(8)-aminomethyldihydrolipoyl]-L-lysyl-[glycine-cleavage complex H protein] + CO2. In terms of biological role, the glycine cleavage system catalyzes the degradation of glycine. The P protein binds the alpha-amino group of glycine through its pyridoxal phosphate cofactor; CO(2) is released and the remaining methylamine moiety is then transferred to the lipoamide cofactor of the H protein. The protein is Probable glycine dehydrogenase (decarboxylating) subunit 1 of Listeria monocytogenes serotype 4b (strain F2365).